We begin with the raw amino-acid sequence, 209 residues long: MELSVYNIKGEDTGKKVVLDDSIFAIEPNDHAIYLDVKQYMANQRQGTHKAKERSELSGSTRKLIRQKGSGGARRGDINSPLLSGGARVFGPRPRNYSFKLNKKLKALARRSALSYKAKNNEIIVVEDFNFDAPKTKAFKAISAALKVGEKKVLYVLPEVNKNVYLSARNLPNTNLILANLINTYTVLASKNLVLTERSVAVVNELFKA.

The segment at 45-80 is disordered; sequence RQGTHKAKERSELSGSTRKLIRQKGSGGARRGDINS.

This sequence belongs to the universal ribosomal protein uL4 family. Part of the 50S ribosomal subunit.

In terms of biological role, one of the primary rRNA binding proteins, this protein initially binds near the 5'-end of the 23S rRNA. It is important during the early stages of 50S assembly. It makes multiple contacts with different domains of the 23S rRNA in the assembled 50S subunit and ribosome. Its function is as follows. Forms part of the polypeptide exit tunnel. The polypeptide is Large ribosomal subunit protein uL4 (Porphyromonas gingivalis (strain ATCC BAA-308 / W83)).